The following is a 675-amino-acid chain: Potassium-transporting ATPase ATP-binding subunit (675 aa).

Transmembrane regions (helical) follow at residues 34–54 (IMFVVEVGMILTLILICFPDI), 65–85 (LITIFIILLITILFANFSEAF), 216–236 (IALFTLLTTLTIIFLVVIVTL), and 245–265 (LILPIAMLIALTVCLIPTTIG). The active-site 4-aspartylphosphate intermediate is aspartate 304. Residues aspartate 341, glutamate 345, 372–379 (FTAETRMS), and lysine 390 each bind ATP. Positions 513 and 517 each coordinate Mg(2+). 3 helical membrane passes run 569-591 (ALTTFSLANDVAKYFAILPALMM), 611-631 (AIISALIFNALIIVALIPIAM), and 644-664 (IFINNMLIYGLGGLIVPFLGI).

It belongs to the cation transport ATPase (P-type) (TC 3.A.3) family. Type IA subfamily. In terms of assembly, the system is composed of three essential subunits: KdpA, KdpB and KdpC.

It localises to the cell membrane. It carries out the reaction K(+)(out) + ATP + H2O = K(+)(in) + ADP + phosphate + H(+). Part of the high-affinity ATP-driven potassium transport (or Kdp) system, which catalyzes the hydrolysis of ATP coupled with the electrogenic transport of potassium into the cytoplasm. This subunit is responsible for energy coupling to the transport system and for the release of the potassium ions to the cytoplasm. This is Potassium-transporting ATPase ATP-binding subunit from Staphylococcus aureus (strain MSSA476).